The sequence spans 416 residues: Actin-like protein 9 (416 aa).

A disordered region spans residues 1–40 (MDASRPKSSESQSSLEAPRPGPNPSPNVVNKPLQRDSPGM).

This sequence belongs to the actin family. As to quaternary structure, interacts with ACTL7A. In terms of tissue distribution, testis-specific.

Its subcellular location is the cytoplasmic vesicle. It localises to the secretory vesicle. It is found in the acrosome. The protein resides in the cytoplasm. The protein localises to the cytoskeleton. Its subcellular location is the perinuclear theca. Its function is as follows. Testis-specic protein that plays an important role in fusion of proacrosomal vesicles and perinuclear theca formation. In Homo sapiens (Human), this protein is Actin-like protein 9.